We begin with the raw amino-acid sequence, 338 residues long: Ketol-acid reductoisomerase (NADP(+)) (338 aa).

The 181-residue stretch at 1–181 (MNVYYDKDCD…GGGRSGIIET (181 aa)) folds into the KARI N-terminal Rossmann domain. Residues 24 to 27 (YGSQ), arginine 47, serine 50, serine 52, and 82 to 85 (DEFQ) each bind NADP(+). Residue histidine 107 is part of the active site. Glycine 133 contacts NADP(+). The KARI C-terminal knotted domain occupies 182–327 (TFKDETETDL…AKLRSMMPWI (146 aa)). Mg(2+) contacts are provided by aspartate 190, glutamate 194, glutamate 226, and glutamate 230. Serine 251 contacts substrate.

Belongs to the ketol-acid reductoisomerase family. Requires Mg(2+) as cofactor.

It catalyses the reaction (2R)-2,3-dihydroxy-3-methylbutanoate + NADP(+) = (2S)-2-acetolactate + NADPH + H(+). The catalysed reaction is (2R,3R)-2,3-dihydroxy-3-methylpentanoate + NADP(+) = (S)-2-ethyl-2-hydroxy-3-oxobutanoate + NADPH + H(+). The protein operates within amino-acid biosynthesis; L-isoleucine biosynthesis; L-isoleucine from 2-oxobutanoate: step 2/4. It participates in amino-acid biosynthesis; L-valine biosynthesis; L-valine from pyruvate: step 2/4. Its function is as follows. Involved in the biosynthesis of branched-chain amino acids (BCAA). Catalyzes an alkyl-migration followed by a ketol-acid reduction of (S)-2-acetolactate (S2AL) to yield (R)-2,3-dihydroxy-isovalerate. In the isomerase reaction, S2AL is rearranged via a Mg-dependent methyl migration to produce 3-hydroxy-3-methyl-2-ketobutyrate (HMKB). In the reductase reaction, this 2-ketoacid undergoes a metal-dependent reduction by NADPH to yield (R)-2,3-dihydroxy-isovalerate. This is Ketol-acid reductoisomerase (NADP(+)) from Psychrobacter sp. (strain PRwf-1).